We begin with the raw amino-acid sequence, 449 residues long: UNC93-like protein MFSD11 (449 aa).

The helical transmembrane segment at 8–28 threads the bilayer; the sequence is LFNIVILGVAFMFMFTAFQTC. The N-linked (GlcNAc...) asparagine glycan is linked to N40. Transmembrane regions (helical) follow at residues 53–73, 74–94, 96–116, 138–158, and 170–190; these read AIIYGVFSASNLITPSVVAIV, GPQISMFVSGLFYSMYIAVFI, PFPWSFYTASVFIGIAAAVLW, IFWALLQSSLFFGNLYIYFAW, and RTVFIALTVISLVGTVLFFLI. S204 carries the post-translational modification Phosphoserine. 6 consecutive transmembrane segments (helical) span residues 239 to 259, 277 to 297, 309 to 329, 359 to 379, 385 to 405, and 410 to 430; these read MLLLSVTTAYTGLELTFFSGV, LIGLSGIFIGIGEILGGSLFG, PVVLLGTLVHFVAFYLIFLNM, FLLGLGDSCFNTQLLSILGFL, APAFAVFKFVQSICAAVAFFY, and LLHWQLLVMVIFGFFGTISFF.

The protein belongs to the unc-93 family. As to expression, widely expressed.

The protein resides in the membrane. This chain is UNC93-like protein MFSD11 (Mfsd11), found in Mus musculus (Mouse).